The sequence spans 409 residues: Snake venom metalloproteinase BITM02A (409 aa).

A signal peptide spans 1 to 20 (MIEVLLVTICLAAFPYQGSS). Residues 21–189 (IILESGNVND…KKASQSNLTP (169 aa)) constitute a propeptide that is removed on maturation. The Peptidase M12B domain maps to 193–389 (RYIELFIVVD…ENPQCILNKR (197 aa)). The Ca(2+) site is built by glutamate 196 and aspartate 280. Cystine bridges form between cysteine 304-cysteine 384, cysteine 344-cysteine 368, and cysteine 346-cysteine 351. Histidine 329 provides a ligand contact to Zn(2+). Glutamate 330 is an active-site residue. Histidine 333 and histidine 339 together coordinate Zn(2+). Positions 384, 387, 399, 402, 404, 406, and 409 each coordinate Ca(2+). The propeptide occupies 390-409 (LRTDTVSTPVSGNELLEAGE).

It belongs to the venom metalloproteinase (M12B) family. P-I subfamily. Monomer. Zn(2+) is required as a cofactor. In terms of tissue distribution, expressed by the venom gland.

It localises to the secreted. In terms of biological role, snake venom metalloproteinase that impairs hemostasis in the envenomed animal. The sequence is that of Snake venom metalloproteinase BITM02A from Bothrops insularis (Golden lancehead).